We begin with the raw amino-acid sequence, 272 residues long: Undecaprenyl-diphosphatase (272 aa).

The next 7 membrane-spanning stretches (helical) occupy residues 2–22 (FDII…FLPI), 43–63 (FINM…ILLY), 82–102 (WQLW…GLPL), 110–130 (LHTP…FIIL), 185–205 (YVAT…VSIL), 224–244 (VLMT…KWLL), and 252–272 (FKPF…VMFI).

The protein belongs to the UppP family.

It localises to the cell membrane. The catalysed reaction is di-trans,octa-cis-undecaprenyl diphosphate + H2O = di-trans,octa-cis-undecaprenyl phosphate + phosphate + H(+). Catalyzes the dephosphorylation of undecaprenyl diphosphate (UPP). Confers resistance to bacitracin. This Lacticaseibacillus paracasei (strain ATCC 334 / BCRC 17002 / CCUG 31169 / CIP 107868 / KCTC 3260 / NRRL B-441) (Lactobacillus paracasei) protein is Undecaprenyl-diphosphatase.